The primary structure comprises 163 residues: Phosphopantetheine adenylyltransferase (163 aa).

Substrate is bound at residue T9. ATP contacts are provided by residues 9–10 (TF) and H17. Substrate-binding residues include K41, T73, and R87. ATP is bound by residues 88–90 (GLR), E98, and 123–129 (FSFISSS).

It belongs to the bacterial CoaD family. In terms of assembly, homohexamer. Requires Mg(2+) as cofactor.

The protein localises to the cytoplasm. It catalyses the reaction (R)-4'-phosphopantetheine + ATP + H(+) = 3'-dephospho-CoA + diphosphate. It participates in cofactor biosynthesis; coenzyme A biosynthesis; CoA from (R)-pantothenate: step 4/5. Its function is as follows. Reversibly transfers an adenylyl group from ATP to 4'-phosphopantetheine, yielding dephospho-CoA (dPCoA) and pyrophosphate. This chain is Phosphopantetheine adenylyltransferase, found in Desulfitobacterium hafniense (strain DSM 10664 / DCB-2).